The chain runs to 3767 residues: Transmembrane cell adhesion receptor mua-3 (3767 aa).

An N-terminal signal peptide occupies residues Met-1–Ser-24. Topologically, residues Thr-25–Leu-3417 are extracellular. The LDL-receptor class A 1 domain maps to Ser-26–Leu-63. 10 cysteine pairs are disulfide-bonded: Cys-27-Cys-41, Cys-35-Cys-54, Cys-62-Cys-76, Cys-69-Cys-89, Cys-97-Cys-110, Cys-104-Cys-123, Cys-131-Cys-144, Cys-138-Cys-157, Cys-165-Cys-179, and Cys-172-Cys-192. LDL-receptor class A domains follow at residues Gly-96–Ala-132, Gln-133–Thr-166, and Thr-167–Thr-209. Asn-201 and Asn-207 each carry an N-linked (GlcNAc...) asparagine glycan. EGF-like domains follow at residues Lys-225–Ile-268, Asn-375–Arg-416, Leu-418–Arg-466, Leu-468–Thr-517, Ala-519–Val-566, Arg-614–Val-663, Ala-665–Lys-713, Lys-714–Arg-760, Val-762–Val-810, Asp-816–Val-860, Val-861–Arg-908, Arg-910–Ile-961, Ala-963–Thr-1012, Thr-1029–Arg-1070, Val-1071–Lys-1118, Leu-1120–Thr-1168, and Ser-1170–Thr-1219. Disulfide bonds link Cys-229–Cys-243, Cys-235–Cys-252, Cys-254–Cys-267, Cys-381–Cys-392, Cys-386–Cys-402, Cys-404–Cys-415, Cys-422–Cys-435, Cys-429–Cys-444, Cys-446–Cys-465, Cys-472–Cys-486, Cys-480–Cys-495, Cys-497–Cys-516, Cys-523–Cys-536, Cys-530–Cys-545, Cys-547–Cys-565, Cys-618–Cys-632, Cys-626–Cys-642, Cys-644–Cys-662, Cys-669–Cys-682, Cys-676–Cys-691, Cys-693–Cys-712, Cys-718–Cys-729, Cys-723–Cys-738, Cys-740–Cys-759, Cys-766–Cys-779, Cys-773–Cys-788, Cys-790–Cys-809, Cys-820–Cys-836, Cys-828–Cys-845, Cys-847–Cys-859, Cys-865–Cys-879, Cys-873–Cys-888, Cys-890–Cys-907, Cys-914–Cys-930, Cys-924–Cys-939, Cys-941–Cys-960, Cys-967–Cys-981, Cys-975–Cys-990, Cys-992–Cys-1011, Cys-1033–Cys-1046, Cys-1040–Cys-1055, Cys-1057–Cys-1069, Cys-1075–Cys-1087, Cys-1081–Cys-1096, Cys-1098–Cys-1117, Cys-1124–Cys-1137, Cys-1131–Cys-1146, Cys-1148–Cys-1167, Cys-1174–Cys-1188, Cys-1182–Cys-1197, and Cys-1199–Cys-1218. Residue Asn-383 is glycosylated (N-linked (GlcNAc...) asparagine). N-linked (GlcNAc...) asparagine glycosylation is present at Asn-515. One can recognise a VWFA domain in the interval Asp-1230–Ile-1406. N-linked (GlcNAc...) asparagine glycosylation is present at Asn-1350. EGF-like domains lie at Ser-1421–Gly-1466, Gly-1466–Val-1510, His-1521–Ala-1562, Tyr-1563–Leu-1608, Leu-1608–Val-1656, Leu-1658–Lys-1706, Leu-1708–Glu-1755, Thr-1759–Ile-1807, Val-1809–Lys-1860, Leu-1862–Lys-1911, Leu-1913–Leu-1961, Arg-1963–Arg-2011, Leu-2014–Gln-2062, Pro-2068–Ser-2112, Ile-2113–Lys-2160, Met-2162–Lys-2208, Leu-2210–Arg-2258, Leu-2260–Leu-2308, Phe-2310–Val-2358, Leu-2360–Ser-2408, Ala-2409–Val-2455, Arg-2456–Glu-2504, Pro-2513–Val-2563, Thr-2565–Lys-2616, Leu-2618–Ser-2666, Ser-2668–Ser-2714, Met-2716–Arg-2763, Arg-2763–Ile-2811, and Arg-2833–Gln-2872. Intrachain disulfides connect Cys-1425-Cys-1441, Cys-1433-Cys-1450, Cys-1452-Cys-1465, Cys-1470-Cys-1484, Cys-1478-Cys-1494, Cys-1496-Cys-1509, Cys-1525-Cys-1538, Cys-1532-Cys-1547, Cys-1549-Cys-1561, Cys-1567-Cys-1583, Cys-1575-Cys-1592, Cys-1594-Cys-1607, Cys-1612-Cys-1625, Cys-1619-Cys-1634, Cys-1636-Cys-1655, Cys-1662-Cys-1675, Cys-1669-Cys-1684, Cys-1686-Cys-1705, Cys-1712-Cys-1726, Cys-1720-Cys-1735, Cys-1737-Cys-1754, Cys-1763-Cys-1776, Cys-1770-Cys-1786, Cys-1788-Cys-1806, Cys-1813-Cys-1829, Cys-1821-Cys-1838, Cys-1840-Cys-1859, Cys-1866-Cys-1880, Cys-1873-Cys-1889, Cys-1891-Cys-1910, Cys-1917-Cys-1930, Cys-1924-Cys-1939, Cys-1941-Cys-1960, Cys-1967-Cys-1980, Cys-1974-Cys-1989, Cys-1991-Cys-2010, Cys-2018-Cys-2031, Cys-2025-Cys-2040, Cys-2042-Cys-2061, Cys-2072-Cys-2088, Cys-2080-Cys-2097, Cys-2099-Cys-2111, Cys-2117-Cys-2131, Cys-2125-Cys-2140, Cys-2142-Cys-2159, Cys-2166-Cys-2180, Cys-2174-Cys-2189, Cys-2191-Cys-2207, Cys-2214-Cys-2228, Cys-2222-Cys-2237, Cys-2239-Cys-2257, Cys-2264-Cys-2278, Cys-2272-Cys-2287, Cys-2289-Cys-2307, Cys-2314-Cys-2327, Cys-2321-Cys-2336, Cys-2338-Cys-2357, Cys-2364-Cys-2377, Cys-2371-Cys-2386, Cys-2388-Cys-2407, Cys-2413-Cys-2425, Cys-2419-Cys-2435, Cys-2437-Cys-2454, Cys-2460-Cys-2474, Cys-2468-Cys-2483, and Cys-2485-Cys-2503. Positions Arg-2492–Glu-2521 are disordered. Over residues Glu-2504–His-2515 the composition is skewed to pro residues. Cystine bridges form between Cys-2517–Cys-2531, Cys-2525–Cys-2541, Cys-2543–Cys-2562, Cys-2569–Cys-2583, Cys-2577–Cys-2594, Cys-2596–Cys-2615, Cys-2622–Cys-2636, Cys-2630–Cys-2645, Cys-2647–Cys-2665, Cys-2672–Cys-2686, Cys-2680–Cys-2695, Cys-2697–Cys-2713, Cys-2720–Cys-2734, Cys-2728–Cys-2743, Cys-2745–Cys-2762, Cys-2767–Cys-2781, Cys-2775–Cys-2790, Cys-2792–Cys-2810, Cys-2837–Cys-2850, Cys-2842–Cys-2856, and Cys-2858–Cys-2871. The SEA 1 domain occupies Glu-2873–Asp-2999. Asn-2944 is a glycosylation site (N-linked (GlcNAc...) asparagine). The region spanning Glu-3009–Arg-3048 is the EGF-like 47 domain. 3 cysteine pairs are disulfide-bonded: Cys-3013–Cys-3026, Cys-3018–Cys-3032, and Cys-3034–Cys-3047. Residues Val-3049–Pro-3174 enclose the SEA 2 domain. N-linked (GlcNAc...) asparagine glycosylation is found at Asn-3120 and Asn-3130. EGF-like domains follow at residues Pro-3176 to Leu-3220, Gly-3224 to Val-3272, and Val-3272 to Met-3324. 15 cysteine pairs are disulfide-bonded: Cys-3180-Cys-3191, Cys-3185-Cys-3201, Cys-3203-Cys-3219, Cys-3228-Cys-3242, Cys-3236-Cys-3251, Cys-3253-Cys-3271, Cys-3276-Cys-3288, Cys-3282-Cys-3297, Cys-3299-Cys-3323, Cys-3332-Cys-3345, Cys-3339-Cys-3354, Cys-3356-Cys-3372, Cys-3377-Cys-3386, Cys-3380-Cys-3397, and Cys-3399-Cys-3408. Asn-3285 carries N-linked (GlcNAc...) asparagine glycosylation. The region spanning Asp-3328 to Gly-3373 is the EGF-like 51; calcium-binding domain. N-linked (GlcNAc...) asparagine; atypical glycosylation is present at Asn-3337. N-linked (GlcNAc...) asparagine glycosylation is present at Asn-3338. One can recognise an EGF-like 52 domain in the interval Gly-3373–Gln-3409. Asn-3394 carries an N-linked (GlcNAc...) asparagine glycan. Asn-3414 carries an N-linked (GlcNAc...) asparagine glycan. The helical transmembrane segment at Val-3418–Phe-3438 threads the bilayer. The Cytoplasmic portion of the chain corresponds to Cys-3439 to Lys-3767. Residues Thr-3582–Asp-3729 are disordered. A compositionally biased stretch (polar residues) spans Gln-3588 to Glu-3597. Residues Gln-3630–Ala-3665 show a composition bias toward low complexity. Basic and acidic residues predominate over residues His-3675–Ser-3684. A compositionally biased stretch (low complexity) spans Ile-3690–Gly-3702.

As to expression, expressed in the hypodermis at the sites of muscle contact, in striated muscles including body wall muscles, the anal sphincter muscles and the junctions between the anal sphincter muscle and rectal cuticle. Also expressed in non-muscle cells including the excretory duct cell and pore cells.

Its subcellular location is the cell membrane. It localises to the cell junction. The protein localises to the hemidesmosome. Functionally, involved in cell adhesion and required for organ positioning and attachment. At the hypodermal surface, required for attachment of the hypdermermis to the basal cuticle in postembryonic development, possibly through intermediate filaments of the cytoskeleton. In Caenorhabditis elegans, this protein is Transmembrane cell adhesion receptor mua-3.